The chain runs to 442 residues: UPF0597 protein HRM2_02820 (442 aa).

It belongs to the UPF0597 family.

In Desulforapulum autotrophicum (strain ATCC 43914 / DSM 3382 / VKM B-1955 / HRM2) (Desulfobacterium autotrophicum), this protein is UPF0597 protein HRM2_02820.